The sequence spans 223 residues: Cytolethal distending toxin subunit A (223 aa).

An N-terminal signal peptide occupies residues methionine 1–alanine 15. The N-palmitoyl cysteine moiety is linked to residue cysteine 16. The S-diacylglycerol cysteine moiety is linked to residue cysteine 16. The interval glutamine 20–leucine 48 is disordered. The mediates binding to target cells stretch occupies residues tryptophan 91–tyrosine 102. The Ricin B-type lectin domain maps to histidine 123 to leucine 212.

As to quaternary structure, heterotrimer of 3 subunits, CdtA, CdtB and CdtC.

It localises to the cell outer membrane. Functionally, CDTs are cytotoxins which induce host cell distension, growth arrest in G2/M phase, nucleus swelling, and chromatin fragmentation in HeLa cells. CdtA, along with CdtC, probably forms a heterodimeric subunit required for the delivery of CdtB. This Haemophilus ducreyi (strain 35000HP / ATCC 700724) protein is Cytolethal distending toxin subunit A (cdtA).